Consider the following 810-residue polypeptide: Ecotropic viral integration site 5 protein homolog (810 aa).

The interaction with alpha-tubulin, gamma-tubulin, BIRC5 and FBXO5 stretch occupies residues 1–483 (MVTNKMTAAF…EAESQCALKE (483 aa)). Disordered regions lie at residues 49-80 (VASP…QLSP) and 98-123 (TDSK…SSSA). The segment covering 51–80 (SPSTSLHTTSSSTTLSTPALSPSSPSQLSP) has biased composition (low complexity). Phosphoserine occurs at positions 102 and 113. Residues 103–123 (LRSVNGSRRNSGSSLVSSSSA) are compositionally biased toward low complexity. The dimerization stretch occupies residues 128–693 (SHLEEDSWIL…LNKSDSNQYI (566 aa)). The 186-residue stretch at 163–348 (GIPHHFRAIV…RIFDIFMSEG (186 aa)) folds into the Rab-GAP TBC domain. The targeting to the centrosomes stretch occupies residues 377–810 (QHFQKVIPHQ…RRRESYSTTV (434 aa)). Residues 406-716 (KKMKKLEKEY…LRCLKGQRGF (311 aa)) adopt a coiled-coil conformation. Residues 487 to 810 (KVLDIEKRNN…RRRESYSTTV (324 aa)) are interaction with AURKB and INCENP. S497, S689, S776, and S778 each carry phosphoserine. A disordered region spans residues 756–810 (GFPLHGKSGSMSLDPAVADGSESETEDSVLETRESNQVVQKERPPRRRESYSTTV). Over residues 785 to 810 (LETRESNQVVQKERPPRRRESYSTTV) the composition is skewed to basic and acidic residues.

Dimeric and monomeric. Interacts with alpha- and gamma-tubulin. Interacts with FBXO5. Interacts with the chromosome passenger complex (CPC) which is at least composed of AURKB/aurora-B, BIRC5/survivin, CDCA8/borealin and INCENP. Post-translationally, probably phosphorylated by PLK1; may be required for degradation during mitosis. In terms of processing, ubiquitinated. Degradation during prophase is ubiquitin-dependent. As to expression, expressed in various cell lines (at protein level). Expressed in a wide range of tissues including brain and adrenal.

The protein resides in the nucleus. The protein localises to the cytoplasm. It is found in the cytoskeleton. Its subcellular location is the microtubule organizing center. It localises to the centrosome. The protein resides in the spindle. Functionally, functions as a regulator of cell cycle progression by stabilizing the FBXO5 protein and promoting cyclin-A accumulation during interphase. May play a role in cytokinesis. The sequence is that of Ecotropic viral integration site 5 protein homolog (EVI5) from Homo sapiens (Human).